Consider the following 63-residue polypeptide: Large ribosomal subunit protein uL30 (63 aa).

Belongs to the universal ribosomal protein uL30 family. As to quaternary structure, part of the 50S ribosomal subunit.

The chain is Large ribosomal subunit protein uL30 from Granulibacter bethesdensis (strain ATCC BAA-1260 / CGDNIH1).